Reading from the N-terminus, the 271-residue chain is Uridine-cytidine kinase 1-A (271 aa).

G24–T32 is an ATP binding site. Residues D81, Y109, H114, R163, R172, and Q180 each contribute to the substrate site. D209 is a binding site for ATP. The tract at residues S241–H271 is disordered. A compositionally biased stretch (basic and acidic residues) spans T262 to H271.

The protein belongs to the uridine kinase family.

It carries out the reaction uridine + ATP = UMP + ADP + H(+). It catalyses the reaction cytidine + ATP = CMP + ADP + H(+). It participates in pyrimidine metabolism; CTP biosynthesis via salvage pathway; CTP from cytidine: step 1/3. The protein operates within pyrimidine metabolism; UMP biosynthesis via salvage pathway; UMP from uridine: step 1/1. Phosphorylates uridine and cytidine to uridine monophosphate and cytidine monophosphate. Does not phosphorylate deoxyribonucleosides or purine ribonucleosides. Can use ATP or GTP as a phosphate donor. The polypeptide is Uridine-cytidine kinase 1-A (uck1-a) (Xenopus laevis (African clawed frog)).